The chain runs to 575 residues: Serine/threonine-protein kinase YPK1 (575 aa).

Residues 1 to 53 (MMSWKFGKKFKEGGFLSGKHHSSNNNSPSDTSRSTTPTPGNPHPEDAVKPPVP) are disordered. Residues 23-38 (SNNNSPSDTSRSTTPT) are compositionally biased toward low complexity. A Protein kinase domain is found at 245–500 (FELLKVIGKG…AQDIKNHPFF (256 aa)). Residues 251–259 (IGKGSFGKV) and Lys274 each bind ATP. Asp368 acts as the Proton acceptor in catalysis. The AGC-kinase C-terminal domain occupies 502-573 (KHINFTKLWN…SVSPLGESVG (72 aa)). Phosphoserine occurs at positions 543 and 562.

Belongs to the protein kinase superfamily. AGC Ser/Thr protein kinase family. RAC subfamily.

It catalyses the reaction L-seryl-[protein] + ATP = O-phospho-L-seryl-[protein] + ADP + H(+). The enzyme catalyses L-threonyl-[protein] + ATP = O-phospho-L-threonyl-[protein] + ADP + H(+). In terms of biological role, probable serine/threonine-protein kinase which may act in the sphingolipid-mediated signaling pathway. May act downstream of TORC2 (TOR complex 2) and PDK1 to regulate sphingolipid metabolism. The protein is Serine/threonine-protein kinase YPK1 of Cryptococcus neoformans var. grubii serotype A (strain H99 / ATCC 208821 / CBS 10515 / FGSC 9487) (Filobasidiella neoformans var. grubii).